Reading from the N-terminus, the 299-residue chain is ATP phosphoribosyltransferase (299 aa).

It belongs to the ATP phosphoribosyltransferase family. Long subfamily. In terms of assembly, equilibrium between an active dimeric form, an inactive hexameric form and higher aggregates. Interconversion between the various forms is largely reversible and is influenced by the natural substrates and inhibitors of the enzyme. Mg(2+) is required as a cofactor.

It localises to the cytoplasm. The catalysed reaction is 1-(5-phospho-beta-D-ribosyl)-ATP + diphosphate = 5-phospho-alpha-D-ribose 1-diphosphate + ATP. It functions in the pathway amino-acid biosynthesis; L-histidine biosynthesis; L-histidine from 5-phospho-alpha-D-ribose 1-diphosphate: step 1/9. Feedback inhibited by histidine. In terms of biological role, catalyzes the condensation of ATP and 5-phosphoribose 1-diphosphate to form N'-(5'-phosphoribosyl)-ATP (PR-ATP). Has a crucial role in the pathway because the rate of histidine biosynthesis seems to be controlled primarily by regulation of HisG enzymatic activity. This Buchnera aphidicola subsp. Melaphis rhois protein is ATP phosphoribosyltransferase.